The sequence spans 336 residues: Fructose-1,6-bisphosphatase class 1 (336 aa).

Mg(2+)-binding residues include Glu-90, Asp-112, Leu-114, and Asp-115. Substrate-binding positions include 115-118, Asn-211, and Lys-277; that span reads DGSS. Mg(2+) is bound at residue Glu-283.

Belongs to the FBPase class 1 family. As to quaternary structure, homotetramer. Requires Mg(2+) as cofactor.

Its subcellular location is the cytoplasm. It catalyses the reaction beta-D-fructose 1,6-bisphosphate + H2O = beta-D-fructose 6-phosphate + phosphate. It functions in the pathway carbohydrate biosynthesis; gluconeogenesis. This Pseudomonas putida (strain W619) protein is Fructose-1,6-bisphosphatase class 1.